We begin with the raw amino-acid sequence, 116 residues long: Peptidyl-tRNA hydrolase (116 aa).

This sequence belongs to the PTH2 family.

The protein localises to the cytoplasm. It catalyses the reaction an N-acyl-L-alpha-aminoacyl-tRNA + H2O = an N-acyl-L-amino acid + a tRNA + H(+). In terms of biological role, the natural substrate for this enzyme may be peptidyl-tRNAs which drop off the ribosome during protein synthesis. This Methanococcus maripaludis (strain DSM 14266 / JCM 13030 / NBRC 101832 / S2 / LL) protein is Peptidyl-tRNA hydrolase (pth).